The sequence spans 446 residues: Mycosin-1 (446 aa).

Positions 1 to 21 are cleaved as a signal peptide; sequence MHRIFLITVALALLTASPASA. The interval 24-43 is disordered; sequence PPPIDPGALPPDVTGPDQPT. A Peptidase S8 domain is found at 64–387; the sequence is PWSNTYLGVA…AGVIDAVAAL (324 aa). Catalysis depends on charge relay system residues Asp90, His121, and Ser332. The helical transmembrane segment at 419–439 threads the bilayer; that stretch reads ITAVALVAVGLTLALGLGALA.

Belongs to the peptidase S8 family.

Its subcellular location is the cell membrane. May play a dual role in regulation of ESX-1 secretion and virulence. Acts as a protease that cleaves EspB. Essential for ESX-1 function, required for early replication in macrophages and full virulence in mice. In Mycobacterium tuberculosis (strain ATCC 25618 / H37Rv), this protein is Mycosin-1.